A 242-amino-acid chain; its full sequence is Tryptophan synthase alpha chain (242 aa).

Residues Glu31 and Asp42 each act as proton acceptor in the active site.

It belongs to the TrpA family. Tetramer of two alpha and two beta chains.

The catalysed reaction is (1S,2R)-1-C-(indol-3-yl)glycerol 3-phosphate + L-serine = D-glyceraldehyde 3-phosphate + L-tryptophan + H2O. The protein operates within amino-acid biosynthesis; L-tryptophan biosynthesis; L-tryptophan from chorismate: step 5/5. Its function is as follows. The alpha subunit is responsible for the aldol cleavage of indoleglycerol phosphate to indole and glyceraldehyde 3-phosphate. This is Tryptophan synthase alpha chain from Staphylococcus aureus (strain Mu3 / ATCC 700698).